The primary structure comprises 409 residues: Arginine deiminase (409 aa).

The active-site Amidino-cysteine intermediate is Cys-399.

Belongs to the arginine deiminase family.

It is found in the cytoplasm. The enzyme catalyses L-arginine + H2O = L-citrulline + NH4(+). The protein operates within amino-acid degradation; L-arginine degradation via ADI pathway; carbamoyl phosphate from L-arginine: step 1/2. In Borrelia garinii subsp. bavariensis (strain ATCC BAA-2496 / DSM 23469 / PBi) (Borreliella bavariensis), this protein is Arginine deiminase.